The chain runs to 410 residues: Elongation factor Tu, chloroplastic (410 aa).

In terms of domain architecture, tr-type G spans 10 to 215 (KPHVNIGTIG…AVDQYIPTPK (206 aa)). The G1 stretch occupies residues 19-26 (GHVDHGKT). 19-26 (GHVDHGKT) is a GTP binding site. Residue T26 coordinates Mg(2+). The interval 61-65 (GITIN) is G2. The tract at residues 82–85 (DCPG) is G3. GTP-binding positions include 82-86 (DCPGH) and 137-140 (NKQD). The G4 stretch occupies residues 137-140 (NKQD). The G5 stretch occupies residues 175-177 (SAL).

Belongs to the TRAFAC class translation factor GTPase superfamily. Classic translation factor GTPase family. EF-Tu/EF-1A subfamily.

It localises to the plastid. It is found in the chloroplast. It carries out the reaction GTP + H2O = GDP + phosphate + H(+). Functionally, GTP hydrolase that promotes the GTP-dependent binding of aminoacyl-tRNA to the A-site of ribosomes during protein biosynthesis. The polypeptide is Elongation factor Tu, chloroplastic (tufA) (Nephroselmis olivacea (Green alga)).